Consider the following 534-residue polypeptide: Neryl diphosphate diphosphatase, chloroplastic (534 aa).

Mg(2+) contacts are provided by aspartate 272, aspartate 276, aspartate 416, and glutamate 424. The DDXXD motif motif lies at aspartate 272–aspartate 276.

It belongs to the terpene synthase family. The cofactor is Mg(2+).

The protein localises to the plastid. The protein resides in the chloroplast. The enzyme catalyses neryl diphosphate + H2O = nerol + diphosphate. It participates in secondary metabolite biosynthesis; terpenoid biosynthesis. Its function is as follows. Monoterpene synthase that catalyzes the hydrolysis of neryl diphosphate (NPP) to form nerol and diphosphate. Is specific for NPP and has no hydrolase activity toward geranyl diphosphate (GPP) or farnesyl diphosphate (FPP). The monoterpene nerol may have an insect repellent effect for the plant leaves. The sequence is that of Neryl diphosphate diphosphatase, chloroplastic from Glycine max (Soybean).